The sequence spans 340 residues: Tetraacyldisaccharide 4'-kinase (340 aa).

An ATP-binding site is contributed by H51 to T58.

Belongs to the LpxK family.

The enzyme catalyses a lipid A disaccharide + ATP = a lipid IVA + ADP + H(+). It participates in glycolipid biosynthesis; lipid IV(A) biosynthesis; lipid IV(A) from (3R)-3-hydroxytetradecanoyl-[acyl-carrier-protein] and UDP-N-acetyl-alpha-D-glucosamine: step 6/6. In terms of biological role, transfers the gamma-phosphate of ATP to the 4'-position of a tetraacyldisaccharide 1-phosphate intermediate (termed DS-1-P) to form tetraacyldisaccharide 1,4'-bis-phosphate (lipid IVA). This is Tetraacyldisaccharide 4'-kinase from Rhodopseudomonas palustris (strain ATCC BAA-98 / CGA009).